A 287-amino-acid polypeptide reads, in one-letter code: Viomycin phosphotransferase (287 aa).

The active-site Proton acceptor is the D190.

This sequence belongs to the aminoglycoside phosphotransferase family.

It carries out the reaction viomycin + ATP = O-phosphoviomycin + ADP + H(+). Functionally, the aminoglycoside phosphotransferases achieve inactivation of their antibiotic substrates by phosphorylation. This is Viomycin phosphotransferase (vph) from Streptomyces vinaceus.